The chain runs to 860 residues: Leucine--tRNA ligase (860 aa).

The 'HIGH' region signature appears at 42–52; it reads PYPSGRLHMGH. Residues 619-623 carry the 'KMSKS' region motif; sequence KMSKS. Lys622 contributes to the ATP binding site.

This sequence belongs to the class-I aminoacyl-tRNA synthetase family.

Its subcellular location is the cytoplasm. It catalyses the reaction tRNA(Leu) + L-leucine + ATP = L-leucyl-tRNA(Leu) + AMP + diphosphate. The chain is Leucine--tRNA ligase from Salmonella agona (strain SL483).